An 806-amino-acid chain; its full sequence is Acetyl-CoA decarbonylase/synthase complex subunit alpha 1 (806 aa).

[4Fe-4S] cluster is bound by residues Cys73, Cys76, Cys77, Cys79, Cys84, and Cys94. Residue His117 participates in CO binding. Positions 250, 278, and 323 each coordinate [Ni-4Fe-4S] cluster. 4Fe-4S ferredoxin-type domains follow at residues 407–436 (DEEF…IPEA) and 446–475 (SYLE…LNII). Cys417, Cys420, Cys423, Cys427, Cys455, Cys458, Cys461, and Cys465 together coordinate [4Fe-4S] cluster. 3 residues coordinate [Ni-4Fe-4S] cluster: Cys523, Cys552, and Cys587.

Belongs to the Ni-containing carbon monoxide dehydrogenase family. As to quaternary structure, heterotetramer of two alpha and two epsilon subunits. The ACDS complex is made up of alpha, epsilon, beta, gamma and delta subunits with a probable stoichiometry of (alpha(2)epsilon(2))(4)-beta(8)-(gamma(1)delta(1))(8). [4Fe-4S] cluster is required as a cofactor. Requires [Ni-4Fe-4S] cluster as cofactor.

It catalyses the reaction CO + 2 oxidized [2Fe-2S]-[ferredoxin] + H2O = 2 reduced [2Fe-2S]-[ferredoxin] + CO2 + 2 H(+). It functions in the pathway one-carbon metabolism; methanogenesis from acetate. Part of the ACDS complex that catalyzes the reversible cleavage of acetyl-CoA, allowing growth on acetate as sole source of carbon and energy. The alpha-epsilon subcomponent functions as a carbon monoxide dehydrogenase. The sequence is that of Acetyl-CoA decarbonylase/synthase complex subunit alpha 1 from Methanosarcina acetivorans (strain ATCC 35395 / DSM 2834 / JCM 12185 / C2A).